The sequence spans 397 residues: Tryptophan synthase beta chain (397 aa).

Residue lysine 89 is modified to N6-(pyridoxal phosphate)lysine.

It belongs to the TrpB family. As to quaternary structure, tetramer of two alpha and two beta chains. Pyridoxal 5'-phosphate serves as cofactor.

The catalysed reaction is (1S,2R)-1-C-(indol-3-yl)glycerol 3-phosphate + L-serine = D-glyceraldehyde 3-phosphate + L-tryptophan + H2O. Its pathway is amino-acid biosynthesis; L-tryptophan biosynthesis; L-tryptophan from chorismate: step 5/5. The beta subunit is responsible for the synthesis of L-tryptophan from indole and L-serine. The protein is Tryptophan synthase beta chain of Leptospira interrogans serogroup Icterohaemorrhagiae serovar copenhageni (strain Fiocruz L1-130).